The sequence spans 130 residues: Ribosome-binding factor A (130 aa).

This sequence belongs to the RbfA family. As to quaternary structure, monomer. Binds 30S ribosomal subunits, but not 50S ribosomal subunits or 70S ribosomes.

It is found in the cytoplasm. In terms of biological role, one of several proteins that assist in the late maturation steps of the functional core of the 30S ribosomal subunit. Associates with free 30S ribosomal subunits (but not with 30S subunits that are part of 70S ribosomes or polysomes). Required for efficient processing of 16S rRNA. May interact with the 5'-terminal helix region of 16S rRNA. This chain is Ribosome-binding factor A, found in Prochlorococcus marinus (strain MIT 9215).